Here is a 1377-residue protein sequence, read N- to C-terminus: Temperature-sensitive hemagglutinin tsh autotransporter (1377 aa).

A signal peptide spans 1 to 52 (MNRIYSLRYSAVARGFIAVSEFARKCVHKSVRRLCFPVLLLIPVLFSAGSLA). A Peptidase S6 domain is found at 53–302 (GTVNNELGYQ…AVIPLDFIGQ (250 aa)). Residues His125, Asp153, and Ser259 each act as charge relay system in the active site. The Autotransporter domain maps to 1111 to 1377 (DINGEAGTWV…AINANIRYSF (267 aa)).

Post-translationally, the C-terminus is blocked. In terms of processing, cleaved to release the mature protein from the outer membrane.

The protein localises to the periplasm. The protein resides in the secreted. It is found in the cell surface. It localises to the cell outer membrane. Functionally, contributes to the development of lesions and deposition of fibrin in the avian air sacs. It can act both as an adhesin and as a serine protease. Agglutinates erythrocytes while in contact with the extracellular surface of the bacterial cells. Can adhere to purified hemoglobin and bind with great efficiency to extracellular matrix proteins. Cleaves casein and exhibits mucinolytic activity. This is Temperature-sensitive hemagglutinin tsh autotransporter (tsh) from Escherichia coli.